The chain runs to 373 residues: Centrosomal protein of 41 kDa (373 aa).

The interval 91–137 (LEDNDSATSEADAEIAAKTNGKGSPEEQSPSPVQFINSTGAGDSSRS) is disordered. Residues S96 and S99 each carry the phosphoserine modification. A Phosphothreonine modification is found at T109. S114 and S121 each carry phosphoserine. Polar residues predominate over residues 116 to 137 (EEQSPSPVQFINSTGAGDSSRS). The Rhodanese domain maps to 169 to 266 (PDCPFLLLDV…LAQKFPEGLV (98 aa)). The disordered stretch occupies residues 317 to 373 (DQGPADNPSRLNQNNSAGKDSKVAACRGGQNLPTSCPASHSSPRTLTSGHLQGKPWK). The span at 325 to 334 (SRLNQNNSAG) shows a compositional bias: polar residues. R343 carries the omega-N-methylarginine modification. The segment covering 347-366 (NLPTSCPASHSSPRTLTSGH) has biased composition (polar residues).

This sequence belongs to the CEP41 family. In terms of assembly, found in a complex with TTLL6.

The protein localises to the cytoplasm. It localises to the cytoskeleton. It is found in the microtubule organizing center. The protein resides in the centrosome. Its subcellular location is the cell projection. The protein localises to the cilium. It localises to the cilium basal body. Its function is as follows. Required during ciliogenesis for tubulin glutamylation in cilium. Probably acts by participating in the transport of TTLL6, a tubulin polyglutamylase, between the basal body and the cilium. This is Centrosomal protein of 41 kDa (Cep41) from Mus musculus (Mouse).